The primary structure comprises 367 residues: tRNA/tmRNA (uracil-C(5))-methyltransferase (367 aa).

The S-adenosyl-L-methionine site is built by glutamine 190, tyrosine 218, asparagine 223, glutamate 239, and aspartate 299. Cysteine 324 serves as the catalytic Nucleophile. Glutamate 358 acts as the Proton acceptor in catalysis.

This sequence belongs to the class I-like SAM-binding methyltransferase superfamily. RNA M5U methyltransferase family. TrmA subfamily.

The catalysed reaction is uridine(54) in tRNA + S-adenosyl-L-methionine = 5-methyluridine(54) in tRNA + S-adenosyl-L-homocysteine + H(+). The enzyme catalyses uridine(341) in tmRNA + S-adenosyl-L-methionine = 5-methyluridine(341) in tmRNA + S-adenosyl-L-homocysteine + H(+). Dual-specificity methyltransferase that catalyzes the formation of 5-methyluridine at position 54 (m5U54) in all tRNAs, and that of position 341 (m5U341) in tmRNA (transfer-mRNA). The protein is tRNA/tmRNA (uracil-C(5))-methyltransferase of Serratia proteamaculans (strain 568).